Here is a 146-residue protein sequence, read N- to C-terminus: Cyanate hydratase (146 aa).

Catalysis depends on residues R87, E90, and S113.

This sequence belongs to the cyanase family.

The catalysed reaction is cyanate + hydrogencarbonate + 3 H(+) = NH4(+) + 2 CO2. In terms of biological role, catalyzes the reaction of cyanate with bicarbonate to produce ammonia and carbon dioxide. This Nostoc sp. (strain PCC 7120 / SAG 25.82 / UTEX 2576) protein is Cyanate hydratase.